A 263-amino-acid polypeptide reads, in one-letter code: Phosphate import ATP-binding protein PstB (263 aa).

Positions 17 to 258 (ISVKNLDFFY…PKRKETEDYI (242 aa)) constitute an ABC transporter domain. 49–56 (GPSGCGKS) serves as a coordination point for ATP.

This sequence belongs to the ABC transporter superfamily. Phosphate importer (TC 3.A.1.7) family. The complex is composed of two ATP-binding proteins (PstB), two transmembrane proteins (PstC and PstA) and a solute-binding protein (PstS).

Its subcellular location is the cell inner membrane. The catalysed reaction is phosphate(out) + ATP + H2O = ADP + 2 phosphate(in) + H(+). Part of the ABC transporter complex PstSACB involved in phosphate import. Responsible for energy coupling to the transport system. The polypeptide is Phosphate import ATP-binding protein PstB (Polaromonas sp. (strain JS666 / ATCC BAA-500)).